A 298-amino-acid polypeptide reads, in one-letter code: Bifunctional protein FolD (298 aa).

NADP(+) contacts are provided by residues 165–167 (GRS), Ser190, and Ile231.

Belongs to the tetrahydrofolate dehydrogenase/cyclohydrolase family. In terms of assembly, homodimer.

It carries out the reaction (6R)-5,10-methylene-5,6,7,8-tetrahydrofolate + NADP(+) = (6R)-5,10-methenyltetrahydrofolate + NADPH. The enzyme catalyses (6R)-5,10-methenyltetrahydrofolate + H2O = (6R)-10-formyltetrahydrofolate + H(+). Its pathway is one-carbon metabolism; tetrahydrofolate interconversion. In terms of biological role, catalyzes the oxidation of 5,10-methylenetetrahydrofolate to 5,10-methenyltetrahydrofolate and then the hydrolysis of 5,10-methenyltetrahydrofolate to 10-formyltetrahydrofolate. The polypeptide is Bifunctional protein FolD (Prochlorococcus marinus (strain MIT 9515)).